The primary structure comprises 537 residues: Glucans biosynthesis protein D (537 aa).

Positions 1–30 form a signal peptide, tat-type signal; it reads MLMYRRDFLKSVTAAWVAFGLPNPLGGAFA.

It belongs to the OpgD/OpgG family. Predicted to be exported by the Tat system. The position of the signal peptide cleavage has not been experimentally proven.

The protein localises to the periplasm. Its pathway is glycan metabolism; osmoregulated periplasmic glucan (OPG) biosynthesis. Functionally, probably involved in the control of the structural glucose backbone of osmoregulated periplasmic glucans (OPGs). In Xylella fastidiosa (strain M12), this protein is Glucans biosynthesis protein D.